The chain runs to 257 residues: Protein YIPF5 (257 aa).

Topologically, residues 1 to 124 (MSGFENLNTD…KVADGSIMNE (124 aa)) are cytoplasmic. Residues 75-106 (PASPQPFYGNSFEDEPPLLEELGINFDHIWQK) form an interaction with Sec23 region. The helical transmembrane segment at 125-145 (TDLAGPMVFCLAFGATLLLAG) threads the bilayer. Residue K146 is a topological domain, lumenal. A helical membrane pass occupies residues 147–167 (IQFGYVYGISAIGCLGMFCLL). At 168 to 173 (NLMSMT) the chain is on the cytoplasmic side. A helical transmembrane segment spans residues 174–194 (GVSFGCVASVLGYCLLPMILL). Residues 195 to 196 (SS) are Lumenal-facing. Residues 197 to 217 (FAVIFSLQGMVGIILTAGIIG) traverse the membrane as a helical segment. Residues 218–236 (WCSFSASKIFISALAMEGQ) lie on the Cytoplasmic side of the membrane. Residues 237 to 257 (QLLVAYPCALLYGVFALISVF) form a helical membrane-spanning segment.

This sequence belongs to the YIP1 family. As to quaternary structure, interacts with the COPII coat components Sec23 (SEC23A and/or SEC23B) and Sec24 (SEC24A and/or SEC24B). Interacts with YIF1A. May interact with RAB1A. Interacts with YIPF3 and YIPF4.

It is found in the endoplasmic reticulum membrane. Its subcellular location is the golgi apparatus. The protein resides in the cis-Golgi network membrane. The protein localises to the cytoplasmic vesicle. It localises to the COPII-coated vesicle. Plays a role in transport between endoplasmic reticulum and Golgi. In pancreatic beta cells, required to transport proinsulin from endoplasmic reticulum into the Golgi. The chain is Protein YIPF5 (YIPF5) from Macaca fascicularis (Crab-eating macaque).